Reading from the N-terminus, the 89-residue chain is Small ribosomal subunit protein uS15 (89 aa).

It belongs to the universal ribosomal protein uS15 family. Part of the 30S ribosomal subunit. Forms a bridge to the 50S subunit in the 70S ribosome, contacting the 23S rRNA.

One of the primary rRNA binding proteins, it binds directly to 16S rRNA where it helps nucleate assembly of the platform of the 30S subunit by binding and bridging several RNA helices of the 16S rRNA. Its function is as follows. Forms an intersubunit bridge (bridge B4) with the 23S rRNA of the 50S subunit in the ribosome. The protein is Small ribosomal subunit protein uS15 of Chlorobium chlorochromatii (strain CaD3).